Here is a 107-residue protein sequence, read N- to C-terminus: U1-lycotoxin-Ls1k (107 aa).

An N-terminal signal peptide occupies residues Met-1–Ser-20. Positions Glu-21–Arg-41 are excised as a propeptide. Disulfide bonds link Cys-44–Cys-59, Cys-51–Cys-68, Cys-58–Cys-86, and Cys-70–Cys-84.

The protein belongs to the neurotoxin 19 (CSTX) family. 04 (U1-Lctx) subfamily. Expressed by the venom gland.

It is found in the secreted. The protein is U1-lycotoxin-Ls1k of Lycosa singoriensis (Wolf spider).